The chain runs to 408 residues: F-box A protein 155 (408 aa).

The disordered stretch occupies residues 1-22 (MSDRGSDQSSSSSDSAQHIPPK).

This sequence belongs to the FTH family.

The sequence is that of F-box A protein 155 (fbxa-155) from Caenorhabditis elegans.